The following is a 312-amino-acid chain: Urease accessory protein 7 (312 aa).

The segment at 28–86 (QEATGTDSHHAHHHHTPSGASSAISHTHDNMPHDHGQFHDHGPGLWTPEEHGHTHEHLE) is disordered. The interval 36–87 (HHAHHHHTPSGASSAISHTHDNMPHDHGQFHDHGPGLWTPEEHGHTHEHLEH) is histine rich nickel-binding domain. Basic and acidic residues predominate over residues 53 to 86 (HTHDNMPHDHGQFHDHGPGLWTPEEHGHTHEHLE). The GTP binding P-loop motif lies at 115–122 (GPVGSGKT). Positions 147–154 (TREDQEFL) match the Switch domain 1 motif. The switch domain 2 motif lies at 171-172 (GG).

It belongs to the SIMIBI class G3E GTPase family. UreG subfamily. In terms of assembly, URE4, URE6 and URE7 may form a complex that acts as a GTP-hydrolysis-dependent molecular chaperone, activating the urease apoprotein URE1.

Urease accessory protein that binds 2 nickel atoms likely via its conserved histidine-rich domain and supplies nickel for the functional urease URE1. Has probably a dual function as a nickel chaperone and GTPase. Plays a role in host brain invasion. The polypeptide is Urease accessory protein 7 (Cryptococcus neoformans var. grubii serotype A (strain H99 / ATCC 208821 / CBS 10515 / FGSC 9487) (Filobasidiella neoformans var. grubii)).